The primary structure comprises 425 residues: GTPase Obg (425 aa).

One can recognise an Obg domain in the interval 1–158 (MFVDQVKVYV…RYIVMELKLI (158 aa)). The disordered stretch occupies residues 118–144 (KGGRGGRGNNRFANSSNPAPHISENGE). The OBG-type G domain maps to 159-327 (ADVGLVGYPS…LMYAIGDTLA (169 aa)). ATP contacts are provided by residues 165 to 172 (GYPSVGKS), 190 to 194 (FTTLT), 211 to 214 (DLPG), 281 to 284 (NKME), and 308 to 310 (SAA). Residues serine 172 and threonine 192 each contribute to the Mg(2+) site. In terms of domain architecture, OCT spans 348-425 (RAEKEPDAFE…IGKLEFDFVE (78 aa)).

It belongs to the TRAFAC class OBG-HflX-like GTPase superfamily. OBG GTPase family. Monomer. Requires Mg(2+) as cofactor.

The protein localises to the cytoplasm. An essential GTPase which binds GTP, GDP and possibly (p)ppGpp with moderate affinity, with high nucleotide exchange rates and a fairly low GTP hydrolysis rate. Plays a role in control of the cell cycle, stress response, ribosome biogenesis and in those bacteria that undergo differentiation, in morphogenesis control. In Brevibacillus brevis (strain 47 / JCM 6285 / NBRC 100599), this protein is GTPase Obg.